The sequence spans 417 residues: Protein-lysine 6-oxidase (417 aa).

Positions 1–21 are cleaved as a signal peptide; sequence MRFAWTVLLLGPLQLCALVHC. Positions 22 to 168 are cleaved as a propeptide — removed by BMP1; it reads APPAAGQQQP…PPSRVDGMVG (147 aa). The interval 64–89 is disordered; the sequence is YQPQRRRDPGAAVPGAANASAQQPRT. Positions 73-84 are enriched in low complexity; the sequence is GAAVPGAANASA. 3 N-linked (GlcNAc...) asparagine glycosylation sites follow: Asn81, Asn97, and Asn144. Residues 137 to 174 are disordered; sequence AGASRAENQTAPGEVPALSNLRPPSRVDGMVGDDPYNP. At Tyr187 the chain carries Sulfotyrosine. The tract at residues 213 to 417 is lysyl-oxidase like; sequence PDLVADPYYI…YASGCTISPY (205 aa). Intrachain disulfides connect Cys238/Cys244, Cys291/Cys340, Cys324/Cys330, Cys351/Cys361, and Cys398/Cys412. Cu cation-binding residues include His292, His294, and His296. Residues 320–355 constitute a cross-link (lysine tyrosylquinone (Lys-Tyr)); sequence KASFCLEDTSCDYGYHRRFACTAHTQGLSPGCYDTY. Tyr355 is modified (2',4',5'-topaquinone).

It belongs to the lysyl oxidase family. As to quaternary structure, interacts with MFAP4. Interacts (via propeptide) with EFEMP2; this interaction is strong and facilitates formation of ternary complexes with ELN during elastic fiber assembly; this interaction limits interaction of EFEMP2 with FBLN5. The cofactor is Cu cation. Requires lysine tyrosylquinone residue as cofactor. Post-translationally, the lysine tyrosylquinone cross-link (LTQ) is generated by condensation of the epsilon-amino group of a lysine with a topaquinone produced by oxidation of tyrosine. Proteolytically cleaved by BMP1 which removes the propeptide. Also proteolytically cleaved by ADAMTS2 and ADAMTS14, but not by ADAMTS3, at an additional cleavage site downstream of the BMP1 cleavage site. The propeptide plays a role in directing the deposition of this enzyme to elastic fibers, via interaction with tropoelastin. Cleavage by BMP1 to remove the propeptide does not increase enzymatic activity but increases binding to collagen. Cleavage by ADAMTS2 produces a form with reduced collagen-binding activity. In terms of processing, sulfated at Tyr-187 and also at either Tyr-183 or Tyr-184 which enhances binding to collagen. As to expression, heart, placenta, skeletal muscle, kidney, lung and pancreas.

The protein localises to the secreted. Its subcellular location is the extracellular space. The enzyme catalyses L-lysyl-[protein] + O2 + H2O = (S)-2-amino-6-oxohexanoyl-[protein] + H2O2 + NH4(+). Its function is as follows. Responsible for the post-translational oxidative deamination of peptidyl lysine residues in precursors to fibrous collagen and elastin. Regulator of Ras expression. May play a role in tumor suppression. Plays a role in the aortic wall architecture. The protein is Protein-lysine 6-oxidase (LOX) of Homo sapiens (Human).